The sequence spans 451 residues: MTKPRQYHITTFGCQMNKADSERMAGILEEMGYHFTEDPYAADLVLYNTCTIRDNAEQKVYSYLGRQAKRKQEKPDLTLIVAGCVAQQEGESLLRRVPELDLIMGPQHANRLQDLLEQVEGGSQVVATEPIHIVEDITKPRRDSTVTAWVNVIYGCNEHCTYCVVPGVRGTEQSRYPEAIRAEMEELGRQGFKEVTLLGQNIDAYGRDLPGTTPEGRNKYTLTDLLYYVHDVPGIERIRFATSHPRYFTERLIKACQELPKVCEHFHIPFQSGDNEVLKAMRRGYTHEKYRRIINTIRSYMPDASISADAIVAFPGETEEQFENTLKLVDEIGFDQLNTAAYSPRPGTPAATWDNQLSEEVKGDRLQRLNHLVAQKAAERSQRYAGRIEEVLVEDQNPKNPSQVMGRTRGNRLTFFEGEINELKGKIVAVKITEARAFSLTGEAVEALVTA.

The region spanning arginine 5–glycine 121 is the MTTase N-terminal domain. Residues cysteine 14, cysteine 50, cysteine 84, cysteine 156, cysteine 160, and cysteine 163 each contribute to the [4Fe-4S] cluster site. A Radical SAM core domain is found at arginine 142 to glutamate 379. A TRAM domain is found at glutamine 382–glutamate 446.

It belongs to the methylthiotransferase family. MiaB subfamily. Monomer. The cofactor is [4Fe-4S] cluster.

The protein localises to the cytoplasm. It carries out the reaction N(6)-dimethylallyladenosine(37) in tRNA + (sulfur carrier)-SH + AH2 + 2 S-adenosyl-L-methionine = 2-methylsulfanyl-N(6)-dimethylallyladenosine(37) in tRNA + (sulfur carrier)-H + 5'-deoxyadenosine + L-methionine + A + S-adenosyl-L-homocysteine + 2 H(+). Functionally, catalyzes the methylthiolation of N6-(dimethylallyl)adenosine (i(6)A), leading to the formation of 2-methylthio-N6-(dimethylallyl)adenosine (ms(2)i(6)A) at position 37 in tRNAs that read codons beginning with uridine. This is tRNA-2-methylthio-N(6)-dimethylallyladenosine synthase from Picosynechococcus sp. (strain ATCC 27264 / PCC 7002 / PR-6) (Agmenellum quadruplicatum).